A 154-amino-acid polypeptide reads, in one-letter code: Nascent polypeptide-associated complex subunit beta (154 aa).

One can recognise an NAC-A/B domain in the interval 33–98 (EQDDTKLIEA…PQEKNVTQLI (66 aa)). The tract at residues 125–154 (APTELNAGAPAGGDEGIPDLIDGEKFDEVE) is disordered.

This sequence belongs to the NAC-beta family. Part of the nascent polypeptide-associated complex (NAC), consisting of EGD2 and EGD1. NAC associates with ribosomes via EGD1.

Its subcellular location is the cytoplasm. The protein localises to the nucleus. Component of the nascent polypeptide-associated complex (NAC), a dynamic component of the ribosomal exit tunnel, protecting the emerging polypeptides from interaction with other cytoplasmic proteins to ensure appropriate nascent protein targeting. The NAC complex also promotes mitochondrial protein import by enhancing productive ribosome interactions with the outer mitochondrial membrane and blocks the inappropriate interaction of ribosomes translating non-secretory nascent polypeptides with translocation sites in the membrane of the endoplasmic reticulum. EGD1 may act as a transcription factor that exert a negative effect on the expression of several genes that are transcribed by RNA polymerase II. This is Nascent polypeptide-associated complex subunit beta (EGD1) from Scheffersomyces stipitis (strain ATCC 58785 / CBS 6054 / NBRC 10063 / NRRL Y-11545) (Yeast).